The following is a 314-amino-acid chain: 2,3-dihydroxyphenylpropionate/2,3-dihydroxicinnamic acid 1,2-dioxygenase (314 aa).

The Proton donor role is filled by His115. The Proton acceptor role is filled by His179.

The protein belongs to the LigB/MhpB extradiol dioxygenase family. As to quaternary structure, homotetramer. It depends on Fe(2+) as a cofactor.

It carries out the reaction 3-(2,3-dihydroxyphenyl)propanoate + O2 = (2Z,4E)-2-hydroxy-6-oxonona-2,4-dienedioate + H(+). It catalyses the reaction (2E)-3-(2,3-dihydroxyphenyl)prop-2-enoate + O2 = (2Z,4E,7E)-2-hydroxy-6-oxonona-2,4,7-trienedioate + H(+). It participates in aromatic compound metabolism; 3-phenylpropanoate degradation. Functionally, catalyzes the non-heme iron(II)-dependent oxidative cleavage of 2,3-dihydroxyphenylpropionic acid and 2,3-dihydroxicinnamic acid into 2-hydroxy-6-ketononadienedioate and 2-hydroxy-6-ketononatrienedioate, respectively. The protein is 2,3-dihydroxyphenylpropionate/2,3-dihydroxicinnamic acid 1,2-dioxygenase of Escherichia coli O81 (strain ED1a).